The following is a 685-amino-acid chain: Tyrosinase (685 aa).

Ser-2 carries the post-translational modification N-acetylserine. 6 residues coordinate Cu cation: His-67, His-97, His-106, His-278, His-282, and His-307. The segment at residues 95–97 (CTH) is a cross-link (2'-(S-cysteinyl)-histidine (Cys-His)). Positions 409–685 (ANFVENVADR…PCGHGPEDHI (277 aa)) are cleaved as a propeptide — could be involved in enzyme activation.

Belongs to the tyrosinase family. Cu(2+) is required as a cofactor.

It catalyses the reaction 2 L-dopa + O2 = 2 L-dopaquinone + 2 H2O. It carries out the reaction L-tyrosine + O2 = L-dopaquinone + H2O. Its function is as follows. This is a copper-containing oxidase that functions in the formation of pigments such as melanins and other polyphenolic compounds. The protein is Tyrosinase (T) of Neurospora crassa (strain ATCC 24698 / 74-OR23-1A / CBS 708.71 / DSM 1257 / FGSC 987).